We begin with the raw amino-acid sequence, 420 residues long: Glycogen synthase kinase-3 beta (420 aa).

A compositionally biased stretch (polar residues) spans 1–22 (MSGRPRTTSFAESCKPVQQPSA). A disordered region spans residues 1-35 (MSGRPRTTSFAESCKPVQQPSAFGSMKVSRDKDGS). The residue at position 9 (S9) is a Phosphoserine; by PKB/AKT1, RPS6KA3 and SGK3. The S-palmitoyl cysteine moiety is linked to residue C14. In terms of domain architecture, Protein kinase spans 56–340 (YTDTKVIGNG…PLEACAHSFF (285 aa)). ATP-binding positions include 62–70 (IGNGSFGVV) and K85. Residue D181 is the Proton acceptor of the active site. A Phosphotyrosine modification is found at Y216. Low complexity-rich tracts occupy residues 387 to 401 (AAST…SDAN) and 409 to 420 (NNAAFASASNST). The disordered stretch occupies residues 387–420 (AASTPTNATAASDANAGDRGQTNNAAFASASNST). A Phosphoserine modification is found at S389. T390 is modified (phosphothreonine).

This sequence belongs to the protein kinase superfamily. CMGC Ser/Thr protein kinase family. GSK-3 subfamily. Monomer. Interacts with DAB2IP (via C2 domain); the interaction stimulates GSK3B kinase activation. Interacts (via C2 domain) with PPP2CA. Interacts with ARRB2, AXIN1, CABYR, DISC1, MMP2, MUC1, NIN, PRUNE1 and ZBED3. Interacts with AXIN1; the interaction mediates hyperphosphorylation of CTNNB1 leading to its ubiquitination and destruction. Interacts with and phosphorylates SNAI1. Interacts with DNM1L (via a C-terminal domain). Found in a complex composed of MACF1, APC, AXIN1, CTNNB1 and GSK3B. Interacts with SGK3. Interacts with the CLOCK-BMAL1 heterodimer. Interacts with the BMAL1. Interacts with CTNND2. The complex composed, at least, of APC, CTNNB1 and GSK3B interacts with JPT1; the interaction requires the inactive form of GSK3B (phosphorylated at 'Ser-9'). Forms a complex composed of PRKAR2A or PRKAR2B, GSK3B and GSKIP through GSKIP interaction; facilitates PKA-induced phosphorylation and regulates GSK3B activity. Interacts with GSKIP. Interacts with GID8. Interacts with PIWIL2. Interacts with LMBR1L. Interacts with DDX3X. Interacts with BIRC2. Interacts with TNFRSF10B; TNFRSF10B stimulation inhibits GSK3B kinase activity. Found in a complex with SLC39A6, SLC39A10 and with GSK3B that controls NCAM1 phosphorylation. Interacts with PKP3 (via ARM repeats); the interaction may be involved in PKP3 protein degradation. In terms of processing, phosphorylated by AKT1 and ILK1. Upon insulin-mediated signaling, the activated PKB/AKT1 and RPS6KA3 protein kinases phosphorylate and deactivate GSK3B, resulting in the dephosphorylation and activation of GYS1. Activated by phosphorylation at Tyr-216. Inactivated by phosphorylation at Ser-9. Mono-ADP-ribosylation by PARP10 negatively regulates kinase activity. Post-translationally, palmitoylated. Palmitoylation by ZDHHC4 prevents AKT1-mediated phosphorylation.

The protein resides in the cytoplasm. The protein localises to the nucleus. It is found in the cell membrane. It carries out the reaction L-seryl-[tau protein] + ATP = O-phospho-L-seryl-[tau protein] + ADP + H(+). The enzyme catalyses L-threonyl-[tau protein] + ATP = O-phospho-L-threonyl-[tau protein] + ADP + H(+). The catalysed reaction is L-seryl-[protein] + ATP = O-phospho-L-seryl-[protein] + ADP + H(+). It catalyses the reaction L-threonyl-[protein] + ATP = O-phospho-L-threonyl-[protein] + ADP + H(+). With respect to regulation, activated by phosphorylation at Tyr-216. In response to insulin, inhibited by phosphorylation at Ser-9 by PKB/AKT1; phosphorylation at this site causes a conformational change, preventing access of substrates to the active site. Inhibited by IL22 treatment which also triggers phosphorylation at Ser-9, promoting inactivation. Inhibited by lithium. Its function is as follows. Constitutively active protein kinase that acts as a negative regulator in the hormonal control of glucose homeostasis, Wnt signaling and regulation of transcription factors and microtubules, by phosphorylating and inactivating glycogen synthase (GYS1 or GYS2), EIF2B, CTNNB1/beta-catenin, APC, AXIN1, DPYSL2/CRMP2, JUN, NFATC1/NFATC, MAPT/TAU and MACF1. Requires primed phosphorylation of the majority of its substrates. In skeletal muscle, contributes to insulin regulation of glycogen synthesis by phosphorylating and inhibiting GYS1 activity and hence glycogen synthesis. May also mediate the development of insulin resistance by regulating activation of transcription factors. Regulates protein synthesis by controlling the activity of initiation factor 2B (EIF2BE/EIF2B5) in the same manner as glycogen synthase. In Wnt signaling, GSK3B forms a multimeric complex with APC, AXIN1 and CTNNB1/beta-catenin and phosphorylates the N-terminus of CTNNB1 leading to its degradation mediated by ubiquitin/proteasomes. Phosphorylates JUN at sites proximal to its DNA-binding domain, thereby reducing its affinity for DNA. Phosphorylates NFATC1/NFATC on conserved serine residues promoting NFATC1/NFATC nuclear export, shutting off NFATC1/NFATC gene regulation, and thereby opposing the action of calcineurin. Phosphorylates MAPT/TAU on 'Thr-548', decreasing significantly MAPT/TAU ability to bind and stabilize microtubules. MAPT/TAU is the principal component of neurofibrillary tangles in Alzheimer disease. Plays an important role in ERBB2-dependent stabilization of microtubules at the cell cortex. Phosphorylates MACF1, inhibiting its binding to microtubules which is critical for its role in bulge stem cell migration and skin wound repair. Probably regulates NF-kappa-B (NFKB1) at the transcriptional level and is required for the NF-kappa-B-mediated anti-apoptotic response to TNF-alpha (TNF/TNFA). Negatively regulates replication in pancreatic beta-cells, resulting in apoptosis, loss of beta-cells and diabetes. Through phosphorylation of the anti-apoptotic protein MCL1, may control cell apoptosis in response to growth factors deprivation. Phosphorylates MUC1 in breast cancer cells, decreasing the interaction of MUC1 with CTNNB1/beta-catenin. Is necessary for the establishment of neuronal polarity and axon outgrowth. Phosphorylates MARK2, leading to inhibition of its activity. Phosphorylates SIK1 at 'Thr-182', leading to sustainment of its activity. Phosphorylates ZC3HAV1 which enhances its antiviral activity. Phosphorylates SNAI1, leading to its ubiquitination and proteasomal degradation. Phosphorylates SFPQ at 'Thr-687' upon T-cell activation. Phosphorylates NR1D1 st 'Ser-55' and 'Ser-59' and stabilizes it by protecting it from proteasomal degradation. Regulates the circadian clock via phosphorylation of the major clock components including BMAL1, CLOCK and PER2. Phosphorylates CLOCK AT 'Ser-427' and targets it for proteasomal degradation. Phosphorylates BMAL1 at 'Ser-17' and 'Ser-21' and primes it for ubiquitination and proteasomal degradation. Phosphorylates FBXL2 at 'Thr-404' and primes it for ubiquitination by the SCF(FBXO3) complex and proteasomal degradation. Phosphorylates OGT at 'Ser-3' or 'Ser-4' which positively regulates its activity. Phosphorylates MYCN in neuroblastoma cells which may promote its degradation. Regulates the circadian rhythmicity of hippocampal long-term potentiation and BMAL1 and PER2 expression. Acts as a regulator of autophagy by mediating phosphorylation of KAT5/TIP60 under starvation conditions, activating KAT5/TIP60 acetyltransferase activity and promoting acetylation of key autophagy regulators, such as ULK1 and RUBCNL/Pacer. Negatively regulates extrinsic apoptotic signaling pathway via death domain receptors. Promotes the formation of an anti-apoptotic complex, made of DDX3X, BRIC2 and GSK3B, at death receptors, including TNFRSF10B. The anti-apoptotic function is most effective with weak apoptotic signals and can be overcome by stronger stimulation. Phosphorylates E2F1, promoting the interaction between E2F1 and USP11, stabilizing E2F1 and promoting its activity. Phosphorylates mTORC2 complex component RICTOR at 'Ser-1235' in response to endoplasmic stress, inhibiting mTORC2. Phosphorylates FXR1, promoting FXR1 ubiquitination by the SCF(FBXO4) complex and FXR1 degradation by the proteasome. Phosphorylates interleukin-22 receptor subunit IL22RA1, preventing its proteasomal degradation. The chain is Glycogen synthase kinase-3 beta from Spermophilus citellus (European ground squirrel).